Here is a 2336-residue protein sequence, read N- to C-terminus: RNA1 polyprotein (2336 aa).

At 599–1210 (QVARIARNIF…YLKEHGLEVL (612 aa)) the chain is on the cytoplasmic side. An SF3 helicase domain is found at 797-964 (MKDLLDLQQR…PGVVFDPMDC (168 aa)). 827 to 834 (GPSHCGKS) lines the ATP pocket. The chain crosses the membrane as a helical span at residues 1211–1231 (LLLAAMMILCVALYYFVGAFI). Residues 1232-1253 (GVMGGALSMGAAMAGLKEVDMK) lie on the Lumenal side of the membrane. The Peptidase C3 domain occupies 1278-1486 (YARGELDEEV…WADNLPNPCM (209 aa)). Active-site for picornain 3C-like protease activity residues include histidine 1320, glutamate 1358, and cysteine 1450. The 129-residue stretch at 1771-1899 (DRAINCDYSS…SCTDKIAIYF (129 aa)) folds into the RdRp catalytic domain.

This sequence belongs to the nepoviruses RNA1 polyprotein family. In terms of processing, specific enzymatic cleavages by picornain 3C-like protease in vivo yield mature proteins. Picornain 3C-like protease is autocatalytically processed. VPg is uridylylated by the polymerase and is covalently linked to the 5'-end of genomic RNA. This uridylylated form acts as a nucleotide-peptide primer for the polymerase.

The protein resides in the host endoplasmic reticulum lumen. It localises to the host endoplasmic reticulum membrane. It carries out the reaction RNA(n) + a ribonucleoside 5'-triphosphate = RNA(n+1) + diphosphate. Picornain 3C-like protease is a thiol protease that cleaves the P1 and P2 polyproteins. The protein is RNA1 polyprotein of Cycas necrotic stunt virus (CNSV).